We begin with the raw amino-acid sequence, 562 residues long: Tubby-related protein 2 (562 aa).

The tract at residues 1–81 is disordered; it reads MDREGPRGPR…RRGEERFQSD (81 aa). Residues 35–46 are compositionally biased toward basic and acidic residues; sequence QKLEQQRQLFEK. Ser-152, Ser-153, and Ser-155 each carry phosphoserine. The segment at 179–294 is disordered; that stretch reads LRRGWLASPG…SNHNAWNMTC (116 aa). Thr-211 is subject to Phosphothreonine. The residue at position 213 (Ser-213) is a Phosphoserine. Over residues 225-240 the composition is skewed to basic and acidic residues; sequence DGDHGDLAPCKVEENT. Residues 285-294 are compositionally biased toward polar residues; sequence SNHNAWNMTC.

Belongs to the TUB family. In terms of tissue distribution, expressed in retina and testis.

It localises to the cytoplasm. It is found in the secreted. This Mus musculus (Mouse) protein is Tubby-related protein 2 (Tulp2).